Consider the following 432-residue polypeptide: RNA binding protein fox-1 homolog 2 (432 aa).

The segment covering 1–21 has biased composition (low complexity); sequence MAEGGQAQQQPPQLGPGAAAR. Residues 1-169 form a disordered region; that stretch reads MAEGGQAQQQ…STPKRLHVSN (169 aa). 2 stretches are compositionally biased toward polar residues: residues 60–69 and 101–121; these read QGNQEPTTTP and YAGQ…PHGE. Low complexity predominate over residues 122-159; that stretch reads QSSNSPSNQNGSLTQTEGGAQTDGQQSQTQSSENSESK. The RRM domain maps to 163 to 239; the sequence is KRLHVSNIPF…RKIEVNNATA (77 aa). An Omega-N-methylarginine modification is found at R323. Asymmetric dimethylarginine is present on residues R339 and R371. R423 and R428 each carry asymmetric dimethylarginine; alternate. Omega-N-methylarginine; alternate occurs at positions 423 and 428.

In terms of assembly, interacts with ER-alpha N-terminal activation domain. Interacts with RBPMS; the interaction allows cooperative assembly of stable cell-specific alternative splicing regulatory complexes.

The protein resides in the nucleus. It localises to the cytoplasm. Its function is as follows. RNA-binding protein that regulates alternative splicing events by binding to 5'-UGCAUGU-3' elements. Prevents binding of U2AF2 to the 3'-splice site. Regulates alternative splicing of tissue-specific exons and of differentially spliced exons during erythropoiesis. Seems to act as a coregulatory factor of ER-alpha. Together with RNA binding proteins RBPMS and MBNL1/2, activates vascular smooth muscle cells alternative splicing events. The polypeptide is RNA binding protein fox-1 homolog 2 (Rbfox2) (Rattus norvegicus (Rat)).